The primary structure comprises 264 residues: MRKLFSFGRRLGQALLDSMDQEYAGRGYHIRDWELRKIHRAAIKGDAAEVEHCLTRRFRDLDARDRKDRTVLHLTCAHGRVEVVTLLLSRRCQINIYDRLNRTPLMKAVHCQEEACAIILLEHGANPNIKDIYSNTALHYAVYNKGTSLAEKLLSHHANIEALNEEGNTPLLFAINSRRQQIVEFLLKNQANLHAIDNFRRTALMLAVQHNSSSIVSLLLQQNINIFSQDLFGQTAEDYAVCYNFRSIQQQILEHKNKILKSHL.

5 ANK repeats span residues 67-96, 100-129, 133-162, 166-195, and 199-228; these read KDRTVLHLTCAHGRVEVVTLLLSRRCQINI, LNRTPLMKAVHCQEEACAIILLEHGANPNI, YSNTALHYAVYNKGTSLAEKLLSHHANIEA, EGNTPLLFAINSRRQQIVEFLLKNQANLHA, and FRRTALMLAVQHNSSSIVSLLLQQNINIFS.

In Homo sapiens (Human), this protein is Putative ankyrin repeat domain-containing protein 19 (ANKRD19P).